The chain runs to 268 residues: Indole-3-glycerol phosphate synthase (268 aa).

The protein belongs to the TrpC family.

It carries out the reaction 1-(2-carboxyphenylamino)-1-deoxy-D-ribulose 5-phosphate + H(+) = (1S,2R)-1-C-(indol-3-yl)glycerol 3-phosphate + CO2 + H2O. It functions in the pathway amino-acid biosynthesis; L-tryptophan biosynthesis; L-tryptophan from chorismate: step 4/5. In Micrococcus luteus (strain ATCC 4698 / DSM 20030 / JCM 1464 / CCM 169 / CCUG 5858 / IAM 1056 / NBRC 3333 / NCIMB 9278 / NCTC 2665 / VKM Ac-2230) (Micrococcus lysodeikticus), this protein is Indole-3-glycerol phosphate synthase.